The sequence spans 403 residues: MKEIRQFTSESVSEGHPDKVADQISDVILDAILAQDRRARVACETLVKTGMVLVAGEITTQAHIDYEQIIRETITEIGYNHSEIGFDGATCAVVNAIGKQSSDIAQGVDRELEEDQGAGDQGMMFGYASDETDVLMPAPITYAHRLVQRQAEIRRNGELPWLRPDAKSQVTLLYEDDVPVAIDAIVLSTQHSPEISQATLREAVIETIIKPVLPADWFAHCRSENIHVNPTGNFIIGGPMGDCGLTGRKIIVDTYGGMARHGGGAFSGKDPSKVDRSAAYAGRYVAKNLVAAGLAERCEVQISYAIGVAEPTSVSVNTFGTGRIAESRLVELIQAHFDLRPVGLLQMLDLIRPIYRKTAAYGHFGREEPEFTWEQTDKAEALRDAAGLGPATAEIINVRSERH.

H16 contacts ATP. Residue D18 coordinates Mg(2+). K(+) is bound at residue E44. 2 residues coordinate L-methionine: E57 and Q100. The segment at 100 to 110 (QSSDIAQGVDR) is flexible loop. Residues 165-167 (DAK), D242, 248-249 (RK), A265, and K269 each bind ATP. D242 contacts L-methionine. K273 contributes to the L-methionine binding site.

This sequence belongs to the AdoMet synthase family. In terms of assembly, homotetramer; dimer of dimers. Requires Mg(2+) as cofactor. The cofactor is K(+).

Its subcellular location is the cytoplasm. It catalyses the reaction L-methionine + ATP + H2O = S-adenosyl-L-methionine + phosphate + diphosphate. The protein operates within amino-acid biosynthesis; S-adenosyl-L-methionine biosynthesis; S-adenosyl-L-methionine from L-methionine: step 1/1. In terms of biological role, catalyzes the formation of S-adenosylmethionine (AdoMet) from methionine and ATP. The overall synthetic reaction is composed of two sequential steps, AdoMet formation and the subsequent tripolyphosphate hydrolysis which occurs prior to release of AdoMet from the enzyme. In Nitrosococcus oceani (strain ATCC 19707 / BCRC 17464 / JCM 30415 / NCIMB 11848 / C-107), this protein is S-adenosylmethionine synthase.